A 145-amino-acid chain; its full sequence is D-aminoacyl-tRNA deacylase (145 aa).

The short motif at 137 to 138 (GP) is the Gly-cisPro motif, important for rejection of L-amino acids element.

It belongs to the DTD family. In terms of assembly, homodimer.

Its subcellular location is the cytoplasm. The enzyme catalyses glycyl-tRNA(Ala) + H2O = tRNA(Ala) + glycine + H(+). It carries out the reaction a D-aminoacyl-tRNA + H2O = a tRNA + a D-alpha-amino acid + H(+). An aminoacyl-tRNA editing enzyme that deacylates mischarged D-aminoacyl-tRNAs. Also deacylates mischarged glycyl-tRNA(Ala), protecting cells against glycine mischarging by AlaRS. Acts via tRNA-based rather than protein-based catalysis; rejects L-amino acids rather than detecting D-amino acids in the active site. By recycling D-aminoacyl-tRNA to D-amino acids and free tRNA molecules, this enzyme counteracts the toxicity associated with the formation of D-aminoacyl-tRNA entities in vivo and helps enforce protein L-homochirality. The polypeptide is D-aminoacyl-tRNA deacylase (Francisella tularensis subsp. holarctica (strain LVS)).